A 398-amino-acid chain; its full sequence is Calcium-binding and coiled-coil domain-containing protein 2 (398 aa).

The CLIR signature appears at 133 to 136 (ILVV). Residues 137 to 301 (TTQGEVEEIE…RENSRLLSYM (165 aa)) adopt a coiled-coil conformation. Positions 203-206 (DYWE) match the LIR-like motif. The tract at residues 314 to 341 (TSDEGGAGQNPGLVYGNPYSGIQESSSP) is disordered. The tract at residues 323-333 (NPGLVYGNPYS) is interaction with LGALS8. The tract at residues 347 to 398 (KKCPICKADDICDHTLEQQQMQALCLNCPICDKIFPATEKQIFEDHVFCHSL) is interaction with MYO6. A UBZ1-type zinc finger spans residues 371–396 (CLNCPICDKIFPATEKQIFEDHVFCH). Zn(2+)-binding residues include Cys374, Cys377, His392, and His396. Phosphoserine is present on Ser397.

It belongs to the CALCOCO family. Dimer. Part of a complex consisting of CALCOCO2, TAX1BP1 and MYO6. Interacts with MYO6. Interacts with GEMIN4. Interacts with ATG8 family members MAP1LC3A, MAP1LC3B, GABARAP, GABARAPL1 and GABARAPL2. Interacts with ATG8 family member MAP1LC3C. Interacts with LGALS8. Interacts with TOM1; the interaction is indirect and is mediated by MYO6, which acts as a bridge between TOM1 and CALCOCO2. Interacts with AZI2.

Its subcellular location is the cytoplasm. It is found in the perinuclear region. The protein resides in the cytoskeleton. The protein localises to the cytoplasmic vesicle. It localises to the autophagosome membrane. Its function is as follows. Xenophagy-specific receptor required for autophagy-mediated intracellular bacteria degradation. Acts as an effector protein of galectin-sensed membrane damage that restricts the proliferation of infecting pathogens upon entry into the cytosol by targeting LGALS8-associated bacteria for autophagy. Initially orchestrates bacteria targeting to autophagosomes and subsequently ensures pathogen degradation by regulating pathogen-containing autophagosome maturation. Bacteria targeting to autophagosomes relies on its interaction with MAP1LC3A, MAP1LC3B and/or GABARAPL2, whereas regulation of pathogen-containing autophagosome maturation requires the interaction with MAP3LC3C. May play a role in ruffle formation and actin cytoskeleton organization and seems to negatively regulate constitutive secretion. This is Calcium-binding and coiled-coil domain-containing protein 2 from Macaca fascicularis (Crab-eating macaque).